A 549-amino-acid polypeptide reads, in one-letter code: DNA polymerase lambda (549 aa).

Positions 17–116 (DPDGMFRGVS…ERLPEHKFAI (100 aa)) constitute a BRCT domain. The interval 126-197 (KEGGAAGSGV…ASGDSKETIA (72 aa)) is disordered. Positions 149–175 (PENRKETAGGNRESRDAIAHPNEDSDV) are enriched in basic and acidic residues. Polar residues predominate over residues 180-197 (STCTSSQSASGDSKETIA). Positions 233 to 247 (NIYRALGDDRRSFSY) are DNA-binding. His-280 is an active-site residue. The interval 315 to 318 (GPAT) is DNA-binding. DCTP-binding positions include Arg-356, 387 to 390 (SYRR), and 396 to 399 (GDMD). Residues 390–399 (RGKSSCGDMD) are involved in primer binding. Residues Asp-397, Asp-399, and Asp-464 each contribute to the Mn(2+) site. The DNA-binding stretch occupies residues 438-479 (IEGTDCGVDTYFGLCTYPGRELRHRIDLKVYPRNRHAFGLLA). Asn-487 contributes to the dCTP binding site.

Belongs to the DNA polymerase type-X family. Interacts with PCNA. It depends on Mn(2+) as a cofactor. Expressed in proliferating tissues. Expressed in roots, root apex, young leaves, shoot apical meristem (SAM), flag leaves and panicles.

It localises to the nucleus. It carries out the reaction DNA(n) + a 2'-deoxyribonucleoside 5'-triphosphate = DNA(n+1) + diphosphate. Functionally, repair polymerase involved in base excision repair (BER) and responsible for repair of lesions that give rise to abasic (AP) sites in DNA. Has both DNA polymerase and terminal transferase activities. Has a 5'-deoxyribose-5-phosphate lyase (dRP lyase) activity. The sequence is that of DNA polymerase lambda from Oryza sativa subsp. japonica (Rice).